Consider the following 195-residue polypeptide: uncharacterized protein (195 aa).

The HD domain maps to 24 to 141; sequence NTDENLKLIF…VFLADKISWD (118 aa).

This is an uncharacterized protein from Lactococcus lactis subsp. cremoris (Streptococcus cremoris).